The sequence spans 583 residues: Long-chain-fatty-acid--AMP ligase FadD26 (583 aa).

This sequence belongs to the ATP-dependent AMP-binding enzyme family.

It catalyses the reaction holo-[(phenol)carboxyphthiodiolenone synthase] + a long-chain fatty acid + ATP = a long-chain fatty acyl-[(phenol)carboxyphthiodiolenone synthase] + AMP + diphosphate. It carries out the reaction eicosanoate + holo-[(phenol)carboxyphthiodiolenone synthase] + ATP = icosanoyl-[(phenol)carboxyphthiodiolenone synthase] + AMP + diphosphate. The catalysed reaction is holo-[(phenol)carboxyphthiodiolenone synthase] + docosanoate + ATP = docosanoyl-[(phenol)carboxyphthiodiolenone synthase] + AMP + diphosphate. It functions in the pathway lipid metabolism; fatty acid biosynthesis. In terms of biological role, catalyzes the activation of long-chain fatty acids as acyl-adenylates (acyl-AMP), which are then transferred to the multifunctional polyketide synthase PpsA for further chain extension. Catalyzes the adenylation of the long-chain fatty acids eicosanoate (C20) or docosanoate (C22), and potentially the very-long-chain fatty acid lignocerate (C24). Involved in the biosynthesis of phthiocerol dimycocerosate (DIM A) and phthiodiolone dimycocerosate (DIM B). This is Long-chain-fatty-acid--AMP ligase FadD26 (fadD26) from Mycobacterium bovis (strain ATCC BAA-935 / AF2122/97).